Here is a 476-residue protein sequence, read N- to C-terminus: Serine/threonine-protein kinase PknF (476 aa).

2 positions are modified to phosphothreonine; by autocatalysis: Thr8 and Thr13. The Protein kinase domain occupies 12–279 (FTIVRQLGSG…FARALGHRLG (268 aa)). ATP-binding positions include 18 to 26 (LGSGGMGEV) and Lys41. The active-site Proton acceptor is Asp137. Thr173, Thr175, and Thr287 each carry phosphothreonine; by autocatalysis. A Phosphoserine; by autocatalysis modification is found at Ser290. The tract at residues 332 to 376 (ADDERAAQPARTRTTTSAGTTTSVAPASTTRPAPTTPTTTGAADT) is disordered. A compositionally biased stretch (low complexity) spans 338-376 (AQPARTRTTTSAGTTTSVAPASTTRPAPTTPTTTGAADT).

This sequence belongs to the protein kinase superfamily. Ser/Thr protein kinase family. In terms of processing, dephosphorylated by PstP.

The catalysed reaction is L-seryl-[protein] + ATP = O-phospho-L-seryl-[protein] + ADP + H(+). The enzyme catalyses L-threonyl-[protein] + ATP = O-phospho-L-threonyl-[protein] + ADP + H(+). The protein is Serine/threonine-protein kinase PknF (pknF) of Mycobacterium bovis (strain ATCC BAA-935 / AF2122/97).